The sequence spans 585 residues: MQRFGTGSSRSWCGRAGTATIAAVLLASGALTGLPPAYAISPPTIDPGALPPDGPPGPLAPMKQNAYCTEVGVLPGTDFQLQPKYMEMLNLNEAWQFGRGDGVKVAVIDTGVTPHPRLPRLIPGGDYVMAGGDGLSDCDAHGTLVASMIAAVPANGAVPLPSVPRRPVTIPTTETPPPPQTVTLSPVPPQTVTVIPAPPPEEGVPPGAPVPGPEPPPAPGPQPPAVDRGGGTVTVPSYSGGRKIAPIDNPRNPHPSAPSPALGPPPDAFSGIAPGVEIISIRQSSQAFGLKDPYTGDEDPQTAQKIDNVETMARAIVHAANMGASVINISDVMCMSARNVIDQRALGAAVHYAAVDKDAVIVAAAGDGSKKDCKQNPIFDPLQPDDPRAWNAVTTVVTPSWFHDYVLTVGAVDANGQPLSKMSIAGPWVSISAPGTDVVGLSPRDDGLINAIDGPDNSLLVPAGTSFSAAIVSGVAALVRAKFPELSAYQIINRLIHTARPPARGVDNQVGYGVVDPVAALTWDVPKGPAEPPKQLSAPLVVPQPPAPRDMVPIWVAAGGLAGALLIGGAVFGTATLMRRSRKQQ.

Residues 1-39 form the signal peptide; the sequence is MQRFGTGSSRSWCGRAGTATIAAVLLASGALTGLPPAYA. The region spanning 83–521 is the Peptidase S8 domain; sequence PKYMEMLNLN…YGVVDPVAAL (439 aa). Residues Asp-109 and His-141 each act as charge relay system in the active site. Residues 163–173 are compositionally biased toward low complexity; the sequence is VPRRPVTIPTT. Residues 163–269 form a disordered region; the sequence is VPRRPVTIPT…PALGPPPDAF (107 aa). Composition is skewed to pro residues over residues 196-224 and 252-267; these read PAPPPEEGVPPGAPVPGPEPPPAPGPQPP and NPHPSAPSPALGPPPD. The Charge relay system role is filled by Ser-466. A helical transmembrane segment spans residues 552 to 572; that stretch reads VPIWVAAGGLAGALLIGGAVF.

Belongs to the peptidase S8 family.

It is found in the cell membrane. In Mycobacterium tuberculosis (strain ATCC 25618 / H37Rv), this protein is Mycosin-5.